The primary structure comprises 86 residues: Small ribosomal subunit protein uS17 (86 aa).

It belongs to the universal ribosomal protein uS17 family. As to quaternary structure, part of the 30S ribosomal subunit.

In terms of biological role, one of the primary rRNA binding proteins, it binds specifically to the 5'-end of 16S ribosomal RNA. The sequence is that of Small ribosomal subunit protein uS17 from Streptococcus thermophilus (strain CNRZ 1066).